A 76-amino-acid polypeptide reads, in one-letter code: Small ribosomal subunit protein bS18 (76 aa).

This sequence belongs to the bacterial ribosomal protein bS18 family. Part of the 30S ribosomal subunit. Forms a tight heterodimer with protein bS6.

In terms of biological role, binds as a heterodimer with protein bS6 to the central domain of the 16S rRNA, where it helps stabilize the platform of the 30S subunit. The protein is Small ribosomal subunit protein bS18 of Aeromonas hydrophila subsp. hydrophila (strain ATCC 7966 / DSM 30187 / BCRC 13018 / CCUG 14551 / JCM 1027 / KCTC 2358 / NCIMB 9240 / NCTC 8049).